The sequence spans 256 residues: Triosephosphate isomerase (256 aa).

10–12 (NWK) lines the substrate pocket. The active-site Electrophile is the histidine 97. The Proton acceptor role is filled by glutamate 169. Residues glycine 175, serine 214, and 235–236 (GG) contribute to the substrate site.

This sequence belongs to the triosephosphate isomerase family. As to quaternary structure, homodimer.

It localises to the cytoplasm. It catalyses the reaction D-glyceraldehyde 3-phosphate = dihydroxyacetone phosphate. It functions in the pathway carbohydrate biosynthesis; gluconeogenesis. Its pathway is carbohydrate degradation; glycolysis; D-glyceraldehyde 3-phosphate from glycerone phosphate: step 1/1. In terms of biological role, involved in the gluconeogenesis. Catalyzes stereospecifically the conversion of dihydroxyacetone phosphate (DHAP) to D-glyceraldehyde-3-phosphate (G3P). This chain is Triosephosphate isomerase, found in Actinobacillus pleuropneumoniae serotype 7 (strain AP76).